Consider the following 679-residue polypeptide: G-protein-signaling modulator 2 (679 aa).

Residues 22–357 (ASCLELALEG…HLEISREVGD (336 aa)) form an important for interaction with NUMA1; INSC and FRMPD1 region. TPR repeat units follow at residues 24 to 57 (CLEL…GTED), 62 to 95 (SAIY…ARTI), 102 to 135 (AKAS…SREL), 142 to 184 (ARAL…AVDL), 202 to 235 (GRAF…AKEF), 242 to 275 (RRAY…ARQL), 282 to 315 (AQSC…AQEL), and 322 to 355 (GRAC…SREV). Phosphoserine occurs at positions 408 and 484. Position 487 is a phosphothreonine (T487). The region spanning 490–512 (DEGFFDLLRRFQSNRMDDQRCHL) is the GoLoco 1 domain. Residues S540 and S564 each carry the phosphoserine modification. GoLoco domains lie at 543–565 (TDEF…RASF), 594–616 (DEDF…RCAP), and 628–650 (DEDF…RVLL). Positions 608, 613, 642, and 647 each coordinate GDP.

It belongs to the GPSM family. In terms of assembly, interacts with the dynein-dynactin complex; this interaction is inhibited in a PLK1-dependent manner. Part of a spindle orientation complex at least composed of GNAI1, GPSM2 and NUMA1. Interacts with LLGL2. Interacts (via TPR repeat region) with INSC/inscuteable. Interacts (via TPR repeat region) with NUMA1 (via C-terminus); this interaction is direct, inhibited in a PLK1-dependent manner and promotes spindle pole organization. INSC and NUMA1 compete for the same binding site, but INSC has higher affinity and can displace NUMA1 (in vitro). Interacts with GNAI2. Interacts (via GoLoco domains) with the GDP-bound form of GNAI1 and GNAI3; has much lower affinity for the GTP-bound form. Interaction with GDP-bound GNAI3 strongly enhances the affinity for NUMA1. Interacts (via TPR repeat region) with FRMPD1. INSC and FRMPD1 compete for the same binding site, but INSC has higher affinity and can displace FRMPD1 (in vitro). Interacts (via TPR repeat region) with FRMPD4. Identified in a complex with INSC and F2RL2/Par3. Interacts with TASOR. In terms of tissue distribution, detected in brain and liver (at protein level). Detected in brain, spleen, liver and testis, and at lower levels in heart, lung and kidney. Enriched in the ventricular zone of the developing central nervous systems. Expressed in proximal colon, ileum, ovary, Sertoli cells of the testis and granular cells within the cerebellum.

The protein localises to the cytoplasm. The protein resides in the cell cortex. It is found in the cytoskeleton. It localises to the spindle pole. Its subcellular location is the lateral cell membrane. In terms of biological role, plays an important role in mitotic spindle pole organization via its interaction with NUMA1. Required for cortical dynein-dynactin complex recruitment during metaphase. Plays a role in metaphase spindle orientation. Plays an important role in asymmetric cell divisions. Has guanine nucleotide dissociation inhibitor (GDI) activity towards G(i) alpha proteins, such as GNAI1 and GNAI3, and thereby regulates their activity. The protein is G-protein-signaling modulator 2 (Gpsm2) of Mus musculus (Mouse).